The sequence spans 179 residues: ATP synthase subunit b, chloroplastic (179 aa).

The helical transmembrane segment at 28 to 46 (LLNILALVAILVYTGKDFL) threads the bilayer.

Belongs to the ATPase B chain family. In terms of assembly, F-type ATPases have 2 components, F(1) - the catalytic core - and F(0) - the membrane proton channel. F(1) has five subunits: alpha(3), beta(3), gamma(1), delta(1), epsilon(1). F(0) has four main subunits: a(1), b(1), b'(1) and c(10-14). The alpha and beta chains form an alternating ring which encloses part of the gamma chain. F(1) is attached to F(0) by a central stalk formed by the gamma and epsilon chains, while a peripheral stalk is formed by the delta, b and b' chains.

It is found in the plastid. The protein localises to the chloroplast thylakoid membrane. Functionally, f(1)F(0) ATP synthase produces ATP from ADP in the presence of a proton or sodium gradient. F-type ATPases consist of two structural domains, F(1) containing the extramembraneous catalytic core and F(0) containing the membrane proton channel, linked together by a central stalk and a peripheral stalk. During catalysis, ATP synthesis in the catalytic domain of F(1) is coupled via a rotary mechanism of the central stalk subunits to proton translocation. Component of the F(0) channel, it forms part of the peripheral stalk, linking F(1) to F(0). The protein is ATP synthase subunit b, chloroplastic of Thalassiosira pseudonana (Marine diatom).